The sequence spans 426 residues: Histidine--tRNA ligase (426 aa).

It belongs to the class-II aminoacyl-tRNA synthetase family. In terms of assembly, homodimer.

It localises to the cytoplasm. The catalysed reaction is tRNA(His) + L-histidine + ATP = L-histidyl-tRNA(His) + AMP + diphosphate + H(+). This Geobacillus kaustophilus (strain HTA426) protein is Histidine--tRNA ligase.